Consider the following 248-residue polypeptide: Probable transcriptional regulatory protein Pfl01_4410 (248 aa).

This sequence belongs to the TACO1 family.

It is found in the cytoplasm. This Pseudomonas fluorescens (strain Pf0-1) protein is Probable transcriptional regulatory protein Pfl01_4410.